Consider the following 602-residue polypeptide: Arginine--tRNA ligase (602 aa).

Positions 138 to 148 match the 'HIGH' region motif; it reads ANPTGPMHVGH.

This sequence belongs to the class-I aminoacyl-tRNA synthetase family. As to quaternary structure, monomer.

It localises to the cytoplasm. It catalyses the reaction tRNA(Arg) + L-arginine + ATP = L-arginyl-tRNA(Arg) + AMP + diphosphate. This chain is Arginine--tRNA ligase, found in Gluconobacter oxydans (strain 621H) (Gluconobacter suboxydans).